The chain runs to 456 residues: Histidine--tRNA ligase (456 aa).

This sequence belongs to the class-II aminoacyl-tRNA synthetase family. In terms of assembly, homodimer.

The protein resides in the cytoplasm. It carries out the reaction tRNA(His) + L-histidine + ATP = L-histidyl-tRNA(His) + AMP + diphosphate + H(+). The protein is Histidine--tRNA ligase (hisS) of Borreliella burgdorferi (strain ATCC 35210 / DSM 4680 / CIP 102532 / B31) (Borrelia burgdorferi).